A 529-amino-acid polypeptide reads, in one-letter code: Ribonuclease Y (529 aa).

A helical membrane pass occupies residues Gly4 to Tyr24. The KH domain occupies Leu216–Val297. Residues Ala342 to Gly435 form the HD domain.

Belongs to the RNase Y family.

Its subcellular location is the cell membrane. Its function is as follows. Endoribonuclease that initiates mRNA decay. The chain is Ribonuclease Y from Helicobacter pylori (strain HPAG1).